Consider the following 463-residue polypeptide: Quinolone resistance protein NorB (463 aa).

14 helical membrane-spanning segments follow: residues 17 to 37, 53 to 73, 86 to 106, 107 to 127, 142 to 162, 165 to 185, 201 to 221, 230 to 250, 273 to 293, 299 to 319, 334 to 354, 357 to 377, 403 to 423, and 435 to 455; these read IGIV…VNVV, IAVS…GGLA, IILN…LLLI, IGRL…LSII, YWSI…GAVA, LGWR…LFLI, FDIK…ILIT, SLLF…FIVL, TASN…NTFV, YSSL…LIMI, PMLI…LTFL, ILYV…LGIY, MASA…YAIV, and IALW…LLLV.

Belongs to the major facilitator superfamily. TCR/Tet family.

Its subcellular location is the cell membrane. In terms of biological role, multidrug efflux pump that acts independently of NorA and is one of the factors that confers resistance against diverse quinolones and chemical compounds. This chain is Quinolone resistance protein NorB (norB), found in Staphylococcus aureus (strain MRSA252).